The sequence spans 393 residues: Protein shisa-9B (393 aa).

Positions 1 to 20 (MKSTGLLLGYFLMKVLVCDA) are cleaved as a signal peptide. At 21–131 (EGEPGKSLDG…MDQHDPTKDK (111 aa)) the chain is on the extracellular side. The disordered stretch occupies residues 28-52 (LDGAVTASGSNDSRDGENGLSETPH). N38 carries N-linked (GlcNAc...) asparagine glycosylation. The chain crosses the membrane as a helical span at residues 132-152 (TNLIVYIICGVVAIMALVGIF). Residues 153–393 (TKLGLEKAHR…VTNSKTEVTV (241 aa)) are Cytoplasmic-facing. A disordered region spans residues 307 to 340 (QKQNGHKSKSTKVHSSHPLAYGSNTIANPGRMSS). The span at 310–321 (NGHKSKSTKVHS) shows a compositional bias: basic residues.

It belongs to the shisa family. SHISA9 subfamily. As to quaternary structure, component of some AMPA receptors (ionotropic glutamate receptors) complex.

The protein localises to the cell projection. Its subcellular location is the dendritic spine membrane. It is found in the synapse. Regulator of short-term neuronal synaptic plasticity in the dentate gyrus. Associates with AMPA receptors (ionotropic glutamate receptors) in synaptic spines and promotes AMPA receptor desensitization at excitatory synapses. This is Protein shisa-9B (shisa9b) from Danio rerio (Zebrafish).